The following is a 448-amino-acid chain: Adenylosuccinate synthetase (448 aa).

Residues 22 to 28 and 50 to 52 each bind GTP; these read GDEGKGK and GHT. The active-site Proton acceptor is the D23. Mg(2+) contacts are provided by D23 and G50. IMP is bound by residues 23 to 26, 48 to 51, T139, R153, Q234, T249, and R321; these read DEGK and NAGH. Catalysis depends on H51, which acts as the Proton donor. 317 to 323 is a binding site for substrate; it reads SVTGRPR. GTP contacts are provided by residues R323, 349 to 351, and 431 to 433; these read KLD and STG.

The protein belongs to the adenylosuccinate synthetase family. Homodimer. The cofactor is Mg(2+).

It localises to the cytoplasm. It carries out the reaction IMP + L-aspartate + GTP = N(6)-(1,2-dicarboxyethyl)-AMP + GDP + phosphate + 2 H(+). It functions in the pathway purine metabolism; AMP biosynthesis via de novo pathway; AMP from IMP: step 1/2. In terms of biological role, plays an important role in the de novo pathway of purine nucleotide biosynthesis. Catalyzes the first committed step in the biosynthesis of AMP from IMP. This chain is Adenylosuccinate synthetase, found in Paraburkholderia xenovorans (strain LB400).